The primary structure comprises 225 residues: Large ribosomal subunit protein bL25 (225 aa).

Positions 197 to 225 (PQREEQMEDTDTAAADEEGDKEEDADKQE) are disordered. A compositionally biased stretch (acidic residues) spans 202-225 (QMEDTDTAAADEEGDKEEDADKQE).

It belongs to the bacterial ribosomal protein bL25 family. CTC subfamily. In terms of assembly, part of the 50S ribosomal subunit; part of the 5S rRNA/L5/L18/L25 subcomplex. Contacts the 5S rRNA. Binds to the 5S rRNA independently of L5 and L18.

This is one of the proteins that binds to the 5S RNA in the ribosome where it forms part of the central protuberance. The polypeptide is Large ribosomal subunit protein bL25 (Dichelobacter nodosus (strain VCS1703A)).